The following is an 87-amino-acid chain: Small ribosomal subunit protein bS20 (87 aa).

A disordered region spans residues 1–22 (MANTSQARKRARQAGVRRVRNA). Over residues 7–20 (ARKRARQAGVRRVR) the composition is skewed to basic residues.

It belongs to the bacterial ribosomal protein bS20 family.

Binds directly to 16S ribosomal RNA. This chain is Small ribosomal subunit protein bS20, found in Nitrosococcus oceani (strain ATCC 19707 / BCRC 17464 / JCM 30415 / NCIMB 11848 / C-107).